The sequence spans 233 residues: Ribonuclease 3 (233 aa).

The RNase III domain occupies Leu-4–Gly-126. Glu-39 is a binding site for Mg(2+). The active site involves Asp-43. 2 residues coordinate Mg(2+): Asp-112 and Glu-115. Glu-115 is an active-site residue. The DRBM domain occupies Asp-153–Asp-222.

Belongs to the ribonuclease III family. In terms of assembly, homodimer. The cofactor is Mg(2+).

The protein resides in the cytoplasm. It catalyses the reaction Endonucleolytic cleavage to 5'-phosphomonoester.. In terms of biological role, digests double-stranded RNA. Involved in the processing of primary rRNA transcript to yield the immediate precursors to the large and small rRNAs (23S and 16S). Processes some mRNAs, and tRNAs when they are encoded in the rRNA operon. Processes pre-crRNA and tracrRNA of type II CRISPR loci if present in the organism. The polypeptide is Ribonuclease 3 (Coxiella burnetii (strain CbuK_Q154) (Coxiella burnetii (strain Q154))).